Reading from the N-terminus, the 94-residue chain is DNA-directed RNA polymerase subunit omega (94 aa).

This sequence belongs to the RNA polymerase subunit omega family. As to quaternary structure, the RNAP catalytic core consists of 2 alpha, 1 beta, 1 beta' and 1 omega subunit. When a sigma factor is associated with the core the holoenzyme is formed, which can initiate transcription.

The catalysed reaction is RNA(n) + a ribonucleoside 5'-triphosphate = RNA(n+1) + diphosphate. In terms of biological role, promotes RNA polymerase assembly. Latches the N- and C-terminal regions of the beta' subunit thereby facilitating its interaction with the beta and alpha subunits. The chain is DNA-directed RNA polymerase subunit omega from Frankia alni (strain DSM 45986 / CECT 9034 / ACN14a).